The primary structure comprises 335 residues: Nuclear transcription factor Y subunit gamma (335 aa).

It belongs to the NFYC/HAP5 subunit family. As to quaternary structure, heterotrimeric transcription factor composed of three components, NF-YA, NF-YB and NF-YC. NF-YB and NF-YC must interact and dimerize for NF-YA association and DNA binding.

Its subcellular location is the nucleus. Its function is as follows. Component of the sequence-specific heterotrimeric transcription factor (NF-Y) which specifically recognizes a 5'-CCAAT-3' box motif found in the promoters of its target genes. NF-Y can function as both an activator and a repressor, depending on its interacting cofactors. The protein is Nuclear transcription factor Y subunit gamma (NFYC) of Pongo abelii (Sumatran orangutan).